Reading from the N-terminus, the 454-residue chain is Notoamide E oxidase notB (454 aa).

A helical transmembrane segment spans residues 15–35 (SPAELTVIIVGLGIAGLTAAI). FAD-binding residues include Glu-48 and Gly-61. The N-linked (GlcNAc...) asparagine glycan is linked to Asn-75. Arg-121 is an FAD binding site. Residues Arg-199 and Tyr-229 contribute to the active site. FAD-binding residues include Asp-322 and Gly-335.

It belongs to the paxM FAD-dependent monooxygenase family. FAD is required as a cofactor.

Its subcellular location is the membrane. The enzyme catalyses notoamide E + NADPH + O2 + H(+) = notoamide C + NADP(+) + H2O. It catalyses the reaction notoamide E + NADPH + O2 + H(+) = notoamide D + NADP(+) + H2O. The protein operates within alkaloid biosynthesis. Functionally, FAD-dependent monooxygenase; part of the gene cluster that mediates the biosynthesis of notoamide, a fungal indole alkaloid that belongs to a family of natural products containing a characteristic bicyclo[2.2.2]diazaoctane core. The first step of notoamide biosynthesis involves coupling of L-proline and L-tryptophan by the bimodular NRPS notE, to produce cyclo-L-tryptophan-L-proline called brevianamide F. The reverse prenyltransferase notF then acts as a deoxybrevianamide E synthase and converts brevianamide F to deoxybrevianamide E via reverse prenylation at C-2 of the indole ring leading to the bicyclo[2.2.2]diazaoctane core. Deoxybrevianamide E is further hydroxylated at C-6 of the indole ring, likely catalyzed by the cytochrome P450 monooxygenase notG, to yield 6-hydroxy-deoxybrevianamide E. 6-hydroxy-deoxybrevianamide E is a specific substrate of the prenyltransferase notC for normal prenylation at C-7 to produce 6-hydroxy-7-prenyl-deoxybrevianamide, also called notoamide S. As the proposed pivotal branching point in notoamide biosynthesis, notoamide S can be diverted to notoamide E through an oxidative pyran ring closure putatively catalyzed by either notH cytochrome P450 monooxygenase or the notD FAD-linked oxidoreductase. This step would be followed by an indole 2,3-epoxidation-initiated pinacol-like rearrangement catalyzed by the notB FAD-dependent monooxygenase leading to the formation of notoamide C and notoamide D. On the other hand notoamide S is converted to notoamide T by notH (or notD), a bifunctional oxidase that also functions as the intramolecular Diels-Alderase responsible for generation of (+)-notoamide T. To generate antipodal (-)-notoaminide T, notH' (or notD') in Aspergillus versicolor is expected to catalyze a Diels-Alder reaction leading to the opposite stereochemistry. The remaining oxidoreductase notD (or notH) likely catalyzes the oxidative pyran ring formation to yield (+)-stephacidin A. The FAD-dependent monooxygenase notI is highly similar to notB and is predicted to catalyze a similar conversion from (+)-stephacidin A to (-)-notoamide B via the 2,3-epoxidation of (+)-stephacidin A followed by a pinacol-type rearrangement. Finally, it remains unclear which enzyme could be responsible for the final hydroxylation steps leading to notoamide A and sclerotiamide. This is Notoamide E oxidase notB from Aspergillus sp. (strain MF297-2).